The chain runs to 560 residues: Glycolate permease GlcA (560 aa).

Over 1–13 (MVTWTQMYMPMGG) the chain is Cytoplasmic. A helical membrane pass occupies residues 14–34 (LGLSALVALIPIIFFFVALAV). Topologically, residues 35–41 (LRLKGHV) are periplasmic. Residues 42-62 (AGAITLILSILIAIFAFKMPI) form a helical membrane-spanning segment. Over 63 to 69 (DMAFAAA) the chain is Cytoplasmic. The chain crosses the membrane as a helical span at residues 70 to 90 (GYGFIYGLWPIAWIIVAAVFL). Residues 91-130 (YKLTVASGQFDIIRSSVISITDDQRLQVLLIGFSFGALLE) lie on the Periplasmic side of the membrane. A helical membrane pass occupies residues 131 to 151 (GAAGFGAPVAITGALLVGLGF). The Cytoplasmic portion of the chain corresponds to 152-158 (KPLYAAG). Residues 159–179 (LCLIANTAPVAFGALGVPILV) form a helical membrane-spanning segment. The Periplasmic portion of the chain corresponds to 180-199 (AGQVTGIDPFHIGAMAGRQL). The helical transmembrane segment at 200 to 220 (PFLSVLVPFWLVAMMDGWKGV) threads the bilayer. The Cytoplasmic portion of the chain corresponds to 221-225 (KETWP). Residues 226–246 (AALVAGGSFAVTQFFTSNYIG) form a helical membrane-spanning segment. At 247–248 (PE) the chain is on the periplasmic side. Residues 249-269 (LPDITSALVSIVSLALFLKVW) form a helical membrane-spanning segment. Over 270–313 (RPKNTETAISMGQSAGAMVVNKPSSGGPVPSEYSLGQIIRAWSP) the chain is Cytoplasmic. The chain crosses the membrane as a helical span at residues 314–334 (FLILTVLVTIWTMKPFKALFA). Residues 335–378 (PGGAFYSLVINFQIPHLHQQVLKAAPIVAQPTPMDAVFKFDPLS) lie on the Periplasmic side of the membrane. The helical transmembrane segment at 379–399 (AGGTAIFIAAIISIFILGVGI) threads the bilayer. The Cytoplasmic segment spans residues 400–408 (KKGIGVFAE). Residues 409–429 (TLISLKWPILSIGMVLAFAFV) form a helical membrane-spanning segment. At 430 to 438 (TNYSGMSTT) the chain is on the periplasmic side. The chain crosses the membrane as a helical span at residues 439–459 (LALVLAGTGVMFPFFSPFLGW). Residues 460–536 (LGVFLTGSDT…ELFRYTVKHS (77 aa)) lie on the Cytoplasmic side of the membrane. The helical transmembrane segment at 537–557 (LIFASVIGIITLLQAYVFTGM) threads the bilayer. At 558–560 (LVS) the chain is on the periplasmic side.

This sequence belongs to the lactate permease family.

Its subcellular location is the cell inner membrane. It carries out the reaction glycolate(in) + H(+)(in) = glycolate(out) + H(+)(out). The catalysed reaction is (S)-lactate(in) + H(+)(in) = (S)-lactate(out) + H(+)(out). The enzyme catalyses (R)-lactate(in) + H(+)(in) = (R)-lactate(out) + H(+)(out). Its activity is regulated as follows. Inhibited by the proton ionophore carbonyl cyanide m-chlorophenylhydrazone (CCCP). Functionally, uptake of glycolate across the membrane. Can also transport L-lactate and D-lactate. Seems to be driven by a proton motive force. This chain is Glycolate permease GlcA, found in Escherichia coli (strain K12).